We begin with the raw amino-acid sequence, 295 residues long: CRISPR-associated endonuclease Cas1 2 (295 aa).

The Mn(2+) site is built by Glu-155, His-215, and Glu-230.

The protein belongs to the CRISPR-associated endonuclease Cas1 family. As to quaternary structure, homodimer, forms a heterotetramer with a Cas2 homodimer. Mg(2+) serves as cofactor. It depends on Mn(2+) as a cofactor.

CRISPR (clustered regularly interspaced short palindromic repeat), is an adaptive immune system that provides protection against mobile genetic elements (viruses, transposable elements and conjugative plasmids). CRISPR clusters contain spacers, sequences complementary to antecedent mobile elements, and target invading nucleic acids. CRISPR clusters are transcribed and processed into CRISPR RNA (crRNA). Acts as a dsDNA endonuclease. Involved in the integration of spacer DNA into the CRISPR cassette. The chain is CRISPR-associated endonuclease Cas1 2 from Pyrobaculum aerophilum (strain ATCC 51768 / DSM 7523 / JCM 9630 / CIP 104966 / NBRC 100827 / IM2).